Reading from the N-terminus, the 44-residue chain is Photosystem I reaction center subunit IX (44 aa).

The helical transmembrane segment at 7–27 (YLSVAPVLATLWFGSLAGLLI) threads the bilayer.

Belongs to the PsaJ family.

The protein resides in the plastid. It is found in the chloroplast thylakoid membrane. May help in the organization of the PsaE and PsaF subunits. This chain is Photosystem I reaction center subunit IX, found in Piper cenocladum (Ant piper).